A 192-amino-acid chain; its full sequence is Chromophore lyase CpcS/CpeS 2 (192 aa).

It belongs to the CpcS/CpeS biliprotein lyase family.

In terms of biological role, covalently attaches a chromophore to Cys residue(s) of phycobiliproteins. This is Chromophore lyase CpcS/CpeS 2 from Synechocystis sp. (strain ATCC 27184 / PCC 6803 / Kazusa).